Here is a 233-residue protein sequence, read N- to C-terminus: Glucosamine-6-phosphate deaminase (233 aa).

The active-site Proton acceptor; for enolization step is the Asp62. The active-site For ring-opening step is the Asn128. His130 serves as the catalytic Proton acceptor; for ring-opening step. The active-site For ring-opening step is the Glu135.

Belongs to the glucosamine/galactosamine-6-phosphate isomerase family. NagB subfamily.

It catalyses the reaction alpha-D-glucosamine 6-phosphate + H2O = beta-D-fructose 6-phosphate + NH4(+). It functions in the pathway amino-sugar metabolism; N-acetylneuraminate degradation; D-fructose 6-phosphate from N-acetylneuraminate: step 5/5. Functionally, catalyzes the reversible isomerization-deamination of glucosamine 6-phosphate (GlcN6P) to form fructose 6-phosphate (Fru6P) and ammonium ion. In Streptococcus agalactiae serotype Ia (strain ATCC 27591 / A909 / CDC SS700), this protein is Glucosamine-6-phosphate deaminase.